Here is a 216-residue protein sequence, read N- to C-terminus: Peptide methionine sulfoxide reductase MsrA (216 aa).

Cys-54 is a catalytic residue.

Belongs to the MsrA Met sulfoxide reductase family.

The catalysed reaction is L-methionyl-[protein] + [thioredoxin]-disulfide + H2O = L-methionyl-(S)-S-oxide-[protein] + [thioredoxin]-dithiol. It carries out the reaction [thioredoxin]-disulfide + L-methionine + H2O = L-methionine (S)-S-oxide + [thioredoxin]-dithiol. Functionally, has an important function as a repair enzyme for proteins that have been inactivated by oxidation. Catalyzes the reversible oxidation-reduction of methionine sulfoxide in proteins to methionine. This chain is Peptide methionine sulfoxide reductase MsrA, found in Xanthomonas campestris pv. phaseoli.